The primary structure comprises 880 residues: Protein translocase subunit SecA (880 aa).

Residues Gln87, 105–109 (GEGKT), and Asp501 contribute to the ATP site. The Zn(2+) site is built by Cys864, Cys866, Cys875, and His876.

Belongs to the SecA family. In terms of assembly, monomer and homodimer. Part of the essential Sec protein translocation apparatus which comprises SecA, SecYEG and auxiliary proteins SecDF-YajC and YidC. The cofactor is Zn(2+).

The protein resides in the cell inner membrane. It is found in the cytoplasm. It catalyses the reaction ATP + H2O + cellular proteinSide 1 = ADP + phosphate + cellular proteinSide 2.. Functionally, part of the Sec protein translocase complex. Interacts with the SecYEG preprotein conducting channel. Has a central role in coupling the hydrolysis of ATP to the transfer of proteins into and across the cell membrane, serving both as a receptor for the preprotein-SecB complex and as an ATP-driven molecular motor driving the stepwise translocation of polypeptide chains across the membrane. The sequence is that of Protein translocase subunit SecA from Orientia tsutsugamushi (strain Boryong) (Rickettsia tsutsugamushi).